A 136-amino-acid polypeptide reads, in one-letter code: Large ribosomal subunit protein uL16c (136 aa).

It belongs to the universal ribosomal protein uL16 family. As to quaternary structure, part of the 50S ribosomal subunit.

Its subcellular location is the plastid. The protein resides in the chloroplast. This chain is Large ribosomal subunit protein uL16c, found in Guizotia abyssinica (Niger).